The following is a 1296-amino-acid chain: Protein ORF75 (1296 aa).

The protein localises to the virion tegument. The chain is Protein ORF75 (ORF75) from Homo sapiens (Human).